Here is a 490-residue protein sequence, read N- to C-terminus: Bifunctional protein HldE (490 aa).

Residues methionine 1 to alanine 330 are ribokinase. Asparagine 205–glutamate 208 contacts ATP. Aspartate 275 is a catalytic residue. The interval phenylalanine 358–serine 490 is cytidylyltransferase.

The protein in the N-terminal section; belongs to the carbohydrate kinase PfkB family. This sequence in the C-terminal section; belongs to the cytidylyltransferase family. As to quaternary structure, homodimer.

It catalyses the reaction D-glycero-beta-D-manno-heptose 7-phosphate + ATP = D-glycero-beta-D-manno-heptose 1,7-bisphosphate + ADP + H(+). The enzyme catalyses D-glycero-beta-D-manno-heptose 1-phosphate + ATP + H(+) = ADP-D-glycero-beta-D-manno-heptose + diphosphate. Its pathway is nucleotide-sugar biosynthesis; ADP-L-glycero-beta-D-manno-heptose biosynthesis; ADP-L-glycero-beta-D-manno-heptose from D-glycero-beta-D-manno-heptose 7-phosphate: step 1/4. It participates in nucleotide-sugar biosynthesis; ADP-L-glycero-beta-D-manno-heptose biosynthesis; ADP-L-glycero-beta-D-manno-heptose from D-glycero-beta-D-manno-heptose 7-phosphate: step 3/4. In terms of biological role, catalyzes the phosphorylation of D-glycero-D-manno-heptose 7-phosphate at the C-1 position to selectively form D-glycero-beta-D-manno-heptose-1,7-bisphosphate. Functionally, catalyzes the ADP transfer from ATP to D-glycero-beta-D-manno-heptose 1-phosphate, yielding ADP-D-glycero-beta-D-manno-heptose. The protein is Bifunctional protein HldE of Rhodopseudomonas palustris (strain BisA53).